The sequence spans 573 residues: WRKY transcription factor SUSIBA2 (573 aa).

2 disordered regions span residues 56 to 133 (AHPD…CSRE) and 157 to 192 (PAEVGTSEPQQMNSSDNAMQEPQSENVADKSADDGY). Positions 64 to 85 (PRDKSVRNAHEDRGSRDFEFKP) are enriched in basic and acidic residues. Positions 108 to 122 (MQNQSMNPSSSSSNM) are enriched in low complexity. Residues 163–182 (SEPQQMNSSDNAMQEPQSEN) are compositionally biased toward polar residues. A compositionally biased stretch (basic and acidic residues) spans 183–192 (VADKSADDGY). A DNA-binding region (WRKY 1) is located at residues 183-247 (VADKSADDGY…YKGRHNHPKP (65 aa)). Zn(2+) is bound by residues Cys-214, Cys-219, His-242, and His-244. A disordered region spans residues 240 to 332 (GRHNHPKPQP…EDLESKRRKM (93 aa)). The span at 263–277 (GEERYDGASAADDKS) shows a compositional bias: basic and acidic residues. Positions 357–422 (SEVDILDDGY…YEGKHNHEVP (66 aa)) form a DNA-binding region, WRKY 2. Residues Cys-388, Cys-393, His-417, and His-419 each contribute to the Zn(2+) site.

Belongs to the WRKY group I family. Expressed in endosperm, but not in leaves.

Its subcellular location is the nucleus. Transcription factor involved in starch synthesis. Acts as a transcriptional activator in sugar signaling. Interacts specifically with the SURE and W-box elements, but not with the SP8a element. This is WRKY transcription factor SUSIBA2 from Hordeum vulgare (Barley).